Here is a 451-residue protein sequence, read N- to C-terminus: Phosphoglucosamine mutase (451 aa).

Serine 102 (phosphoserine intermediate) is an active-site residue. Positions 102, 242, 244, and 246 each coordinate Mg(2+). Phosphoserine is present on serine 102.

The protein belongs to the phosphohexose mutase family. Requires Mg(2+) as cofactor. Post-translationally, activated by phosphorylation.

It carries out the reaction alpha-D-glucosamine 1-phosphate = D-glucosamine 6-phosphate. In terms of biological role, catalyzes the conversion of glucosamine-6-phosphate to glucosamine-1-phosphate. This is Phosphoglucosamine mutase from Staphylococcus saprophyticus subsp. saprophyticus (strain ATCC 15305 / DSM 20229 / NCIMB 8711 / NCTC 7292 / S-41).